The following is a 215-amino-acid chain: Large ribosomal subunit protein uL3 (215 aa).

The tract at residues 136 to 155 (GVSISHRSHGSTGQRQDPGK) is disordered. Position 151 is an N5-methylglutamine (Gln-151).

The protein belongs to the universal ribosomal protein uL3 family. Part of the 50S ribosomal subunit. Forms a cluster with proteins L14 and L19. Methylated by PrmB.

One of the primary rRNA binding proteins, it binds directly near the 3'-end of the 23S rRNA, where it nucleates assembly of the 50S subunit. In Rickettsia felis (strain ATCC VR-1525 / URRWXCal2) (Rickettsia azadi), this protein is Large ribosomal subunit protein uL3.